Here is a 618-residue protein sequence, read N- to C-terminus: Protease 4 (618 aa).

Residues Met-1–Glu-24 are Cytoplasmic-facing. Residues Met-25–Ile-45 form a helical membrane-spanning segment. At Gly-46–Arg-618 the chain is on the periplasmic side. Lys-209 functions as the Proton donor/acceptor in the catalytic mechanism. The Nucleophile role is filled by Ser-409.

The protein belongs to the peptidase S49 family. In terms of assembly, homotetramer.

It localises to the cell inner membrane. Functionally, digests cleaved signal peptides in vitro, its in vivo function is unknown. This activity is necessary to maintain proper secretion of mature proteins across the membrane. The protein is Protease 4 (sppA) of Salmonella typhi.